The sequence spans 277 residues: Phosphonates import ATP-binding protein PhnC (277 aa).

An ABC transporter domain is found at 3–251; the sequence is IKLDKVSARH…RLQALYAQHL (249 aa). An ATP-binding site is contributed by 40 to 47; it reads GPSGAGKT.

Belongs to the ABC transporter superfamily. Phosphonates importer (TC 3.A.1.9.1) family. The complex is composed of two ATP-binding proteins (PhnC), two transmembrane proteins (PhnE) and a solute-binding protein (PhnD).

It localises to the cell inner membrane. It carries out the reaction phosphonate(out) + ATP + H2O = phosphonate(in) + ADP + phosphate + H(+). Part of the ABC transporter complex PhnCDE involved in phosphonates import. Responsible for energy coupling to the transport system. This Polaromonas sp. (strain JS666 / ATCC BAA-500) protein is Phosphonates import ATP-binding protein PhnC.